The following is a 121-amino-acid chain: Large ribosomal subunit protein uL24 (121 aa).

The protein belongs to the universal ribosomal protein uL24 family. Part of the 50S ribosomal subunit.

Functionally, one of two assembly initiator proteins, it binds directly to the 5'-end of the 23S rRNA, where it nucleates assembly of the 50S subunit. In terms of biological role, located at the polypeptide exit tunnel on the outside of the subunit. The polypeptide is Large ribosomal subunit protein uL24 (Pyrococcus furiosus (strain ATCC 43587 / DSM 3638 / JCM 8422 / Vc1)).